A 546-amino-acid polypeptide reads, in one-letter code: Germacrene-D synthase (546 aa).

The Mg(2+) site is built by D303, D307, D448, and E456. A DDXXD motif motif is present at residues 303-307 (DDIYD).

The protein belongs to the terpene synthase family. The cofactor is Mg(2+). Requires Mn(2+) as cofactor.

It catalyses the reaction (2E,6E)-farnesyl diphosphate = (-)-germacrene D + diphosphate. It functions in the pathway secondary metabolite biosynthesis; terpenoid biosynthesis. Its function is as follows. Sesquiterpene synthase that catalyzes the formation of germacrene D from trans,trans-farnesyl diphosphate (FPP). This Ocimum basilicum (Sweet basil) protein is Germacrene-D synthase (GDS).